The primary structure comprises 467 residues: Glutamate--tRNA ligase (467 aa).

The 'HIGH' region motif lies at 14–24; the sequence is PSPTGFLHLGG. A compositionally biased stretch (basic and acidic residues) spans 124-134; the sequence is PRYDGTWRPEP. The tract at residues 124 to 156 is disordered; it reads PRYDGTWRPEPGKTLPPVPAGRKPVVRFKNPQD. A 'KMSKS' region motif is present at residues 246-250; it reads KLSKR. Lysine 249 contributes to the ATP binding site.

It belongs to the class-I aminoacyl-tRNA synthetase family. Glutamate--tRNA ligase type 1 subfamily. In terms of assembly, monomer.

Its subcellular location is the cytoplasm. The catalysed reaction is tRNA(Glu) + L-glutamate + ATP = L-glutamyl-tRNA(Glu) + AMP + diphosphate. Catalyzes the attachment of glutamate to tRNA(Glu) in a two-step reaction: glutamate is first activated by ATP to form Glu-AMP and then transferred to the acceptor end of tRNA(Glu). The protein is Glutamate--tRNA ligase of Bordetella petrii (strain ATCC BAA-461 / DSM 12804 / CCUG 43448).